A 272-amino-acid chain; its full sequence is Cytochrome c oxidase subunit 3 (272 aa).

The next 7 helical transmembrane spans lie at 20–40 (PWPLVAALGGLSLTFGGVLFM), 45–65 (GGGELLCLGFFTILYVMFTWW), 89–109 (GMILFIVSEIMFFFAFFWAFF), 128–148 (VVAISPWGLPFLNTILLLSSG), 166–186 (AMQGLSVTLAFAIAFTAMQGF), 204–224 (FYMATGFHGFHVIIGTIFLFI), and 248–268 (YWHFVDVVWLFLFLTIYWWGF).

It belongs to the cytochrome c oxidase subunit 3 family. As to quaternary structure, component of the cytochrome c oxidase (complex IV, CIV), a multisubunit enzyme composed of a catalytic core of 3 subunits and several supernumerary subunits. The complex exists as a monomer or a dimer and forms supercomplexes (SCs) in the inner mitochondrial membrane with ubiquinol-cytochrome c oxidoreductase (cytochrome b-c1 complex, complex III, CIII).

The protein resides in the mitochondrion inner membrane. It carries out the reaction 4 Fe(II)-[cytochrome c] + O2 + 8 H(+)(in) = 4 Fe(III)-[cytochrome c] + 2 H2O + 4 H(+)(out). Its function is as follows. Component of the cytochrome c oxidase, the last enzyme in the mitochondrial electron transport chain which drives oxidative phosphorylation. The respiratory chain contains 3 multisubunit complexes succinate dehydrogenase (complex II, CII), ubiquinol-cytochrome c oxidoreductase (cytochrome b-c1 complex, complex III, CIII) and cytochrome c oxidase (complex IV, CIV), that cooperate to transfer electrons derived from NADH and succinate to molecular oxygen, creating an electrochemical gradient over the inner membrane that drives transmembrane transport and the ATP synthase. Cytochrome c oxidase is the component of the respiratory chain that catalyzes the reduction of oxygen to water. Electrons originating from reduced cytochrome c in the intermembrane space (IMS) are transferred via the dinuclear copper A center (CU(A)) of subunit 2 and heme A of subunit 1 to the active site in subunit 1, a binuclear center (BNC) formed by heme A3 and copper B (CU(B)). The BNC reduces molecular oxygen to 2 water molecules using 4 electrons from cytochrome c in the IMS and 4 protons from the mitochondrial matrix. The chain is Cytochrome c oxidase subunit 3 (COX3) from Pylaiella littoralis (Seaweed).